Consider the following 192-residue polypeptide: Small ribosomal subunit protein uS5 (192 aa).

The disordered stretch occupies residues 1 to 21 (MAAERERGGRERGGRDRDERD). One can recognise an S5 DRBM domain in the interval 24–87 (FVDKLVHINR…DSAKRNLTRV (64 aa)).

It belongs to the universal ribosomal protein uS5 family. As to quaternary structure, part of the 30S ribosomal subunit. Contacts proteins S4 and S8.

Its function is as follows. With S4 and S12 plays an important role in translational accuracy. Located at the back of the 30S subunit body where it stabilizes the conformation of the head with respect to the body. This Afipia carboxidovorans (strain ATCC 49405 / DSM 1227 / KCTC 32145 / OM5) (Oligotropha carboxidovorans) protein is Small ribosomal subunit protein uS5.